Consider the following 173-residue polypeptide: RTX-III toxin-activating lysine-acyltransferase ApxIIC (173 aa).

Active-site residues include His-29 and Asp-98.

The protein belongs to the RTX toxin acyltransferase family. In terms of assembly, homodimer.

Its subcellular location is the cytoplasm. It carries out the reaction a fatty acyl-[ACP] + L-lysyl-[protein] = N(6)-(fatty acyl)-L-lysyl-[protein] + holo-[ACP] + H(+). In terms of biological role, protein-lysine acyltransferase that catalyzes fatty acylation of the protoxin, thereby converting it to the active toxin. The chain is RTX-III toxin-activating lysine-acyltransferase ApxIIC (apxIIIC) from Actinobacillus pleuropneumoniae (Haemophilus pleuropneumoniae).